A 148-amino-acid chain; its full sequence is Large ribosomal subunit protein bL9 (148 aa).

This sequence belongs to the bacterial ribosomal protein bL9 family.

Functionally, binds to the 23S rRNA. The chain is Large ribosomal subunit protein bL9 from Acetivibrio thermocellus (strain ATCC 27405 / DSM 1237 / JCM 9322 / NBRC 103400 / NCIMB 10682 / NRRL B-4536 / VPI 7372) (Clostridium thermocellum).